Here is a 253-residue protein sequence, read N- to C-terminus: Ditrans,polycis-undecaprenyl-diphosphate synthase ((2E,6E)-farnesyl-diphosphate specific) (253 aa).

Asp-26 is an active-site residue. Asp-26 contributes to the Mg(2+) binding site. Substrate contacts are provided by residues 27-30 (GNGR), Trp-31, Arg-39, His-43, and 71-73 (SSE). Asn-74 functions as the Proton acceptor in the catalytic mechanism. Substrate is bound by residues Trp-75, Arg-77, and Arg-194. His-199 contacts Mg(2+). 200–202 (RIS) provides a ligand contact to substrate. Glu-213 serves as a coordination point for Mg(2+).

The protein belongs to the UPP synthase family. As to quaternary structure, homodimer. The cofactor is Mg(2+).

It catalyses the reaction 8 isopentenyl diphosphate + (2E,6E)-farnesyl diphosphate = di-trans,octa-cis-undecaprenyl diphosphate + 8 diphosphate. Catalyzes the sequential condensation of isopentenyl diphosphate (IPP) with (2E,6E)-farnesyl diphosphate (E,E-FPP) to yield (2Z,6Z,10Z,14Z,18Z,22Z,26Z,30Z,34E,38E)-undecaprenyl diphosphate (di-trans,octa-cis-UPP). UPP is the precursor of glycosyl carrier lipid in the biosynthesis of bacterial cell wall polysaccharide components such as peptidoglycan and lipopolysaccharide. The protein is Ditrans,polycis-undecaprenyl-diphosphate synthase ((2E,6E)-farnesyl-diphosphate specific) of Shigella flexneri.